Here is a 398-residue protein sequence, read N- to C-terminus: MASSVDMKAIRDAQRAEGPATILAIGTATPANCVYQADYPDYYFRITKSEHMVDLKEKFKRMCDKSMIRKRYMHITEEYLKQNPNMCAYMAPSLDVRQDLVVVEVPKLGKEAAMKAIKEWGHPKSKITHLIFCTTSGVDMPGADYQLTKLLGLRPSVKRFMMYQQGCFAGGTVLRLAKDLAENNKGARVLVVCSEITAVTFRGPNDTHLDSLVGQALFGDGAAAVIVGSDPDLTTERPLFEMVSAAQTILPDSEGAIDGHLREVGLTFHLLKDVPGLISKNIEKALTTAFSPLGINDWNSIFWIAHPGGPAILDQVELKLGLKEEKLRATRHVLSEYGNMSSACVLFIIDEMRKKSSENGAGTTGEGLEWGVLFGFGPGLTVETVVLHSVPTTVTVAV.

Cysteine 167 is a catalytic residue.

This sequence belongs to the thiolase-like superfamily. Chalcone/stilbene synthases family.

It carries out the reaction (E)-4-coumaroyl-CoA + 3 malonyl-CoA + 3 H(+) = 2',4,4',6'-tetrahydroxychalcone + 3 CO2 + 4 CoA. Its pathway is secondary metabolite biosynthesis; flavonoid biosynthesis. Functionally, the primary product of this enzyme is 4,2',4',6'-tetrahydroxychalcone (also termed naringenin-chalcone or chalcone) which can under specific conditions spontaneously isomerize into naringenin. This is Chalcone synthase 1 (CHS1) from Gerbera hybrida (Daisy).